Reading from the N-terminus, the 79-residue chain is Small ribosomal subunit protein bS18c (79 aa).

Belongs to the bacterial ribosomal protein bS18 family. In terms of assembly, part of the 30S ribosomal subunit.

It localises to the plastid. The protein resides in the chloroplast. The sequence is that of Small ribosomal subunit protein bS18c from Physcomitrium patens (Spreading-leaved earth moss).